The chain runs to 402 residues: Sulfate adenylyltransferase (402 aa).

The protein belongs to the sulfate adenylyltransferase family.

It carries out the reaction sulfate + ATP + H(+) = adenosine 5'-phosphosulfate + diphosphate. Its pathway is sulfur metabolism; hydrogen sulfide biosynthesis; sulfite from sulfate: step 1/3. The protein is Sulfate adenylyltransferase of Ruthia magnifica subsp. Calyptogena magnifica.